The sequence spans 400 residues: Endophilin-B2 (400 aa).

N-acetylmethionine is present on Met1. Residues 1–27 (MDFNMKKLASDAGIFFTRAVQFTEEKF) are membrane-binding amphipathic helix. Phosphoserine is present on Ser10. One can recognise a BAR domain in the interval 24 to 287 (EEKFGQAEKT…LGSSQGAIFP (264 aa)). The stretch at 205–234 (SASALWNDEVDKAEQELRVAQTEFDRQAEV) forms a coiled coil. The 61-residue stretch at 340 to 400 (SGTRKARVLY…VPVTYLELLS (61 aa)) folds into the SH3 domain. Ser400 is modified (phosphoserine).

Belongs to the endophilin family. In terms of assembly, homodimer, and heterodimer with SH3GLB1.

The protein localises to the cytoplasm. The protein is Endophilin-B2 (Sh3glb2) of Mus musculus (Mouse).